A 439-amino-acid chain; its full sequence is Probable serine/threonine-protein kinase WNK6 (439 aa).

The interval 1-30 is disordered; that stretch reads MMPPKPAAEDVADEQPEPPDEDPDVAEADP. Over residues 10 to 27 the composition is skewed to acidic residues; the sequence is DVADEQPEPPDEDPDVAE. In terms of domain architecture, Protein kinase spans 35–293; the sequence is LRYREIIGSG…ASELLKSPFL (259 aa). Residues 116-119 and Lys166 each bind ATP; that span reads TELF. Catalysis depends on Asp183, which acts as the Proton acceptor.

It belongs to the protein kinase superfamily. Ser/Thr protein kinase family. WNK subfamily.

It catalyses the reaction L-seryl-[protein] + ATP = O-phospho-L-seryl-[protein] + ADP + H(+). The catalysed reaction is L-threonyl-[protein] + ATP = O-phospho-L-threonyl-[protein] + ADP + H(+). The polypeptide is Probable serine/threonine-protein kinase WNK6 (WNK6) (Oryza sativa subsp. japonica (Rice)).